We begin with the raw amino-acid sequence, 30 residues long: Acidic phospholipase A2 homolog cannitoxin gamma chain (30 aa).

Heterotrimer of alpha, beta, and gamma chains; non-covalently linked. Glycosylated. Expressed by the venom gland.

The protein localises to the secreted. Its function is as follows. Heterotrimer: Snake venom phospholipase A2 (PLA2) heterotrimer that acts as a potent presynaptic neurotoxin by blocking synaptic transmission and synaptic vesicle recycling. Enzymatic activity is essential for the neurotoxic effects. May act by binding in a calcium-dependent fashion to neurotonal pentraxin-1 (NPTX1) and neurotonal pentraxin-2 (NPTX2), but not to neuronal pentraxin receptor (NPTXR). Also binds to taipoxin-associated calcium binding protein 49 (RCN2), a protein localized in the lumen of endoplasmic reticulum. Monomer (gamma chain): Snake venom phospholipase A2 homolog that is neither toxic nor enzymatically active. Does not bind calcium. In Oxyuranus scutellatus canni (Papuan taipan), this protein is Acidic phospholipase A2 homolog cannitoxin gamma chain.